A 935-amino-acid polypeptide reads, in one-letter code: Progesterone receptor (935 aa).

The tract at residues 1–49 is disordered; it reads MTELKAKGXRAPHVAGSPSSPKVXSPLPCRQAAXPFPGSQTSDTLPEVS. An AF3; mediates transcriptional activation region spans residues 1–164; the sequence is MTELKAKGXR…SATQRVLSRL (164 aa). Residues 1 to 568 are modulating, Pro-Rich; sequence MTELKAKGXR…YSFESLPQKI (568 aa). Over residues 17–28 the composition is skewed to low complexity; it reads SPSSPKVXSPLP. Serine 20 bears the Phosphoserine mark. The LXXL motif 1 signature appears at 55-59; the sequence is LDGLL. The segment at 61 to 255 is disordered; it reads PRICQGQDPP…GAAAGGGAAA (195 aa). Serine 81 is subject to Phosphoserine. An LXXL motif 2 motif is present at residues 115 to 119; that stretch reads LDTLW. 2 positions are modified to phosphoserine: serine 130 and serine 162. The segment at 165–305 is mediates transcriptional transrepression; sequence MSRSGGKAGD…LATTVTDFIH (141 aa). Positions 183-187 match the Nuclear localization signal motif; that stretch reads KVLPR. Serine 190 is modified (phosphoserine). Polar residues predominate over residues 191–203; that stretch reads PSRQLLLPTTGSP. The residue at position 213 (serine 213) is a Phosphoserine. Residues 220–231 are compositionally biased toward acidic residues; sequence EVEEEDGSESED. Over residues 232–246 the composition is skewed to low complexity; it reads SAGPLLKGKPRALGG. Phosphoserine; by MAPK1 is present on serine 294. Residues 331-365 form a disordered region; sequence GGAGAASAFAPPRSSPSASSTPVPGGDFPDCAYAP. Low complexity predominate over residues 335 to 356; the sequence is AASAFAPPRSSPSASSTPVPGG. Serine 345 is subject to Phosphoserine; by MAPK. Residue lysine 388 forms a Glycyl lysine isopeptide (Lys-Gly) (interchain with G-Cter in SUMO); alternate linkage. Residue lysine 388 forms a Glycyl lysine isopeptide (Lys-Gly) (interchain with G-Cter in ubiquitin); alternate linkage. The residue at position 400 (serine 400) is a Phosphoserine; by CDK2. A disordered region spans residues 415 to 452; the sequence is PDFPLGPPPPLPPRAPPSRPGEAAVTAAPASASVSSAS. A compositionally biased stretch (pro residues) spans 418–433; it reads PLGPPPPLPPRAPPSR. Low complexity predominate over residues 434–452; that stretch reads PGEAAVTAAPASASVSSAS. An AF1; mediates transcriptional activation region spans residues 456–548; the sequence is STLECILYKA…VYPPYLNYLR (93 aa). Lysine 533 is covalently cross-linked (Glycyl lysine isopeptide (Lys-Gly) (interchain with G-Cter in SUMO)). 2 NR C4-type zinc fingers span residues 569 to 589 and 605 to 629; these read CLICGDEASGCHYGVLTCGSC and CAGRNDCIVDKIRRKNCPACRLRKC. Residues 569 to 641 constitute a DNA-binding region (nuclear receptor); that stretch reads CLICGDEASG…AGMVLGGRKF (73 aa). Serine 678 is modified (phosphoserine). In terms of domain architecture, NR LBD spans 681-915; sequence QDIQLIPPLI…EFPEMMSEVI (235 aa). Residues 689-935 are AF2; mediates transcriptional activation; the sequence is LINLLLSIEP…MVKPLLFHKK (247 aa).

It belongs to the nuclear hormone receptor family. As to quaternary structure, interacts with SMARD1 and UNC45A. Interacts with CUEDC2; the interaction promotes ubiquitination, decreases sumoylation, and represses transcriptional activity. Interacts with PIAS3; the interaction promotes sumoylation of PR in a hormone-dependent manner, inhibits DNA-binding, and alters nuclear export. Interacts with SP1; the interaction requires ligand-induced phosphorylation on Ser-345 by ERK1/2-MAPK. Interacts with PRMT2. Interacts with NCOA2 and NCOA1. Interacts with KLF9. Interacts with GTF2B. In terms of processing, phosphorylated on multiple serine sites. Several of these sites are hormone-dependent. Phosphorylation on Ser-294 is highly hormone-dependent and modulates ubiquitination and sumoylation on Lys-388. Phosphorylation on Ser-345 also requires induction by hormone. Basal phosphorylation on Ser-81, Ser-162, Ser-190 and Ser-400 is increased in response to progesterone and can be phosphorylated in vitro by the CDK2-A1 complex. Increased levels of phosphorylation on Ser-400 also in the presence of EGF, heregulin, IGF, PMA and FBS. Phosphorylation at this site by CDK2 is ligand-independent, and increases nuclear translocation and transcriptional activity. Phosphorylation at Ser-162 and Ser-294, but not at Ser-190, is impaired during the G(2)/M phase of the cell cycle. Phosphorylation on Ser-345 by ERK1/2 MAPK is required for interaction with SP1. Sumoylation is hormone-dependent and represses transcriptional activity. Sumoylation on all three sites is enhanced by PIAS3. Desumoylated by SENP1. Sumoylation on Lys-388, the main site of sumoylation, is repressed by ubiquitination on the same site, and modulated by phosphorylation at Ser-294. Post-translationally, ubiquitination is hormone-dependent and represses sumoylation on the same site. Promoted by MAPK-mediated phosphorylation on Ser-294. In terms of processing, palmitoylated by ZDHHC7 and ZDHHC21. Palmitoylation is required for plasma membrane targeting and for rapid intracellular signaling via ERK and AKT kinases and cAMP generation.

It is found in the nucleus. Its subcellular location is the cytoplasm. The steroid hormones and their receptors are involved in the regulation of eukaryotic gene expression and affect cellular proliferation and differentiation in target tissues. Transcriptional activator of several progesteron-dependent promoters in a variety of cell types. Involved in activation of SRC-dependent MAPK signaling on hormone stimulation. The sequence is that of Progesterone receptor (PGR) from Ateles paniscus (Black spider monkey).